The primary structure comprises 145 residues: 3-dehydroquinate dehydratase (145 aa).

Y22 functions as the Proton acceptor in the catalytic mechanism. The substrate site is built by N71, H77, and D84. The active-site Proton donor is H97. Substrate is bound by residues 98-99 (LS) and R108.

It belongs to the type-II 3-dehydroquinase family. As to quaternary structure, homododecamer.

It carries out the reaction 3-dehydroquinate = 3-dehydroshikimate + H2O. The protein operates within metabolic intermediate biosynthesis; chorismate biosynthesis; chorismate from D-erythrose 4-phosphate and phosphoenolpyruvate: step 3/7. In terms of biological role, catalyzes a trans-dehydration via an enolate intermediate. The polypeptide is 3-dehydroquinate dehydratase (Francisella tularensis subsp. tularensis (strain WY96-3418)).